A 431-amino-acid chain; its full sequence is MAKTRTKKNANKRVVKGTLDQKHTEKINKFENMSKALPKKKEKLKKHEAQLEELMSLNPNKFTHENIRRKSYLMDSIKNLKEEINSIENCSESLDYIVNTLPILVNYYDNGDIVDDDKEELISEAMADGKKNILSYFFKETSQQENSSESNNDIVKNGTGGSTSKRKKIQPSNRCSGSKTGKVTETKPRLSRAKLYDNYLNVTDPHYRKSVKKSQNVCSVPDCDGEKILNQNDGYMVCKKCGFSEPILLTTDKPNYKEPTQDSGTYAYKRINHLTEILSQLQAKESTDIPNKVYEAIKRELKKRKIDKNDLDIFRLRRILKKLNYRKFYEHVPHILQVINGKEPPNFSRADEMKIKALFKSIQKPFAIYCPKNRKNFLNYSYVLHKFCELLELDEYTNYFPLLKNNAKLLQHDKIWKNICDYQGWYFYKSL.

Positions 28 to 95 form a coiled coil; sequence NKFENMSKAL…SIENCSESLD (68 aa). The segment at 142–187 is disordered; it reads SQQENSSESNNDIVKNGTGGSTSKRKKIQPSNRCSGSKTGKVTETK. The span at 143-152 shows a compositional bias: low complexity; it reads QQENSSESNN. The span at 170–181 shows a compositional bias: polar residues; sequence QPSNRCSGSKTG. Residues 218-241 fold into a zinc finger; it reads CSVPDCDGEKILNQNDGYMVCKKC.

Belongs to the nucleo-cytoplasmic large DNA viruses (NCLDVs) VLTF-3 family.

Functionally, putative transcription factor. The chain is Putative transcription factor R429 from Acanthamoeba polyphaga (Amoeba).